The sequence spans 853 residues: Wolframin (853 aa).

Residues 139 to 179 (KQLERKMRRIYNLQRKRRRRDDDRSSSSSEGEQEPECEPLE) are disordered. Residues 144 to 157 (KMRRIYNLQRKRRR) show a composition bias toward basic residues. Residues 169–179 (GEQEPECEPLE) are compositionally biased toward acidic residues. Transmembrane regions (helical) follow at residues 238 to 258 (MIFH…NLIV), 259 to 279 (SIPN…ISWW), 285 to 305 (LPLV…CKML), 347 to 367 (LYFF…TDAW), 373 to 393 (LTII…YASS), 446 to 466 (FCLN…IMMA), 473 to 493 (GVYT…VCIA), 513 to 533 (IVLF…FVAI), 545 to 565 (WGST…LALN), and 572 to 592 (ITML…LPYM). 2 N-linked (GlcNAc...) asparagine glycosylation sites follow: Asn694 and Asn769.

As to expression, detected in adult brain.

The protein resides in the membrane. The protein localises to the endoplasmic reticulum. It is found in the mitochondrion. In terms of biological role, participates in the regulation of cellular Ca(2+) homeostasis, at least partly, by modulating the filling state of the endoplasmic reticulum Ca(2+) store. In neurons and glial cells, has a role in maintaining neuronal function and integrity during aging. This chain is Wolframin, found in Drosophila melanogaster (Fruit fly).